The sequence spans 236 residues: MNEQVNENKIQIVIIDDHQLFREGVKRILAMEPEFEVVADGEDGENAVELVEKYNPDVILMDINMPKVNGVEATRDLIQRYPDVKVLVLSIHDDESYVTHVLKTGASGYLLKEMDADALIEAVKVVAQGGAYIHPKVTHNLIKEYRRLVNEDEQESSEIGFKEVEYRKPLHILTRRECEVLQLMTDGYSNRMIGEALYISEKTVKNHVSNILQKMNVNDRTQAVVESIKNGWVKVR.

Positions 11-127 constitute a Response regulatory domain; it reads QIVIIDDHQL…ALIEAVKVVA (117 aa). Asp-62 bears the 4-aspartylphosphate mark. An HTH luxR-type domain is found at 166–231; the sequence is YRKPLHILTR…QAVVESIKNG (66 aa). The H-T-H motif DNA-binding region spans 190 to 209; sequence NRMIGEALYISEKTVKNHVS.

Post-translationally, phosphorylated and dephosphorylated by DegS.

It localises to the cytoplasm. Functionally, member of the two-component regulatory system DegS/DegU, which plays an important role in the transition growth phase. This chain is Transcriptional regulatory protein DegU (degU), found in Brevibacillus brevis (Bacillus brevis).